The chain runs to 265 residues: Chlorophyll a-b binding protein 1A, chloroplastic (265 aa).

A chloroplast-targeting transit peptide spans 1–34 (MAAAAMALSSPSFAGQAVKLSPSASENSGNGRIT). A helical transmembrane segment spans residues 151–171 (LVHAQSILAIWACQVVLMGAV). 6 residues coordinate chlorophyll b: Val152, Ser156, Gln164, Glu172, Arg175, and Leu181. Lys212, Glu213, Asn216, Arg218, Gln230, His245, and Ala254 together coordinate chlorophyll a. A helical transmembrane segment spans residues 219 to 239 (LAMFSMFGFFVQAIVTGKGPL). Position 261 (Phe261) interacts with chlorophyll b.

Belongs to the light-harvesting chlorophyll a/b-binding (LHC) protein family. As to quaternary structure, the LHC complex consists of chlorophyll a-b binding proteins. Binds at least 14 chlorophylls (8 Chl-a and 6 Chl-b) and carotenoids such as lutein and neoxanthin. is required as a cofactor. In terms of processing, photoregulated by reversible phosphorylation of its threonine residues.

It is found in the plastid. It localises to the chloroplast thylakoid membrane. The light-harvesting complex (LHC) functions as a light receptor, it captures and delivers excitation energy to photosystems with which it is closely associated. The chain is Chlorophyll a-b binding protein 1A, chloroplastic (CAB1A) from Solanum lycopersicum (Tomato).